The sequence spans 166 residues: Large ribosomal subunit protein uL10 (166 aa).

This sequence belongs to the universal ribosomal protein uL10 family. In terms of assembly, part of the ribosomal stalk of the 50S ribosomal subunit. The N-terminus interacts with L11 and the large rRNA to form the base of the stalk. The C-terminus forms an elongated spine to which L12 dimers bind in a sequential fashion forming a multimeric L10(L12)X complex.

Forms part of the ribosomal stalk, playing a central role in the interaction of the ribosome with GTP-bound translation factors. This is Large ribosomal subunit protein uL10 from Bacillus cereus (strain G9842).